Reading from the N-terminus, the 1451-residue chain is Fanconi anemia group D2 protein (1451 aa).

The segment at 1-37 is disordered; the sequence is MVSKRRLSKSEDKESLTEDASKTRKQPLSKKTKKSHI. An interaction with FANCE region spans residues 1–291; the sequence is MVSKRRLSKS…IKFILHSVTA (291 aa). Phosphoserine is present on Ser8. Residues 8-22 show a composition bias toward basic and acidic residues; it reads SKSEDKESLTEDASK. The span at 23–36 shows a compositional bias: basic residues; the sequence is TRKQPLSKKTKKSH. Residue Ser222 is modified to Phosphoserine; by ATM. The segment at 248–359 is interaction with BRCA2; it reads VLSSLRLDPN…IKSAIRYEKT (112 aa). Lys561 is covalently cross-linked (Glycyl lysine isopeptide (Lys-Gly) (interchain with G-Cter in ubiquitin)). Residues Ser592, Ser594, and Ser717 each carry the phosphoserine modification. The disordered stretch occupies residues 868–906; that stretch reads IERKQKTDGSKTSSSDTLSEEKNSECDPTPSHRGQLNKE. Ser1257 carries the phosphoserine modification. Positions 1396–1451 are disordered; that stretch reads GEEIKSQNSQESTADESEDDMSSQASKSKATEDGEEDEVSAGEKEQDSDESYDDSD. 2 positions are modified to phosphoserine; by ATM: Ser1401 and Ser1404. Residues Ser1412 and Ser1423 each carry the phosphoserine modification. Phosphothreonine is present on Thr1426. Over residues 1428-1451 the composition is skewed to acidic residues; it reads DGEEDEVSAGEKEQDSDESYDDSD. Ser1435 is modified (phosphoserine).

It belongs to the Fanconi anemia protein FANCD2 family. As to quaternary structure, homodimer; cannot be ubiquitinated and does not bind DNA. Part of a FANCI-FANCD2 heterodimeric complex that binds and scans dsDNA for DNA damage. Interacts directly with FANCE and FANCI. Interacts with USP1 and MEN1. The ubiquitinated form specifically interacts with BRCA1 and BLM. Both the nonubiquitinated and the monoubiquitinated forms interact with BRCA2; this interaction is mediated by phosphorylated FANCG and the complex also includes XCCR3. The ubiquitinated form specifically interacts with MTMR15/FAN1 (via UBZ-type zinc finger), leading to recruit MTMR15/FAN1 to sites of DNA damage. Interacts with DCLRE1B/Apollo. Interacts with POLN. Interacts with UHRF1 and UHRF2; these interactions promote FANCD2 activation. Post-translationally, monoubiquitinated on Lys-561 during S phase and upon genotoxic stress by FANCL in complex with E2 ligases UBE2T or UBE2W (isoform 1 and isoform 2). Deubiquitinated by USP1 as cells enter G2/M, or once DNA repair is completed. Monoubiquitination requires the joint intervention of the FANC core complex, including FANCA, FANCB, FANCC, FANCE, FANCF, FANCG, and FANCM, and proteins involved in cell cycle checkpoints and DNA repair, including RPA1, ATR, CHEK1 and BRCA1, and is mediated by FANCL/PHF9. Monoubiquitination prevents DNA release from the FANCI-FANCD2 complex. FANCD2 is only ubiquitinated in the FANCI-FANCD2 complex and the monoubiquitination of FANCD2 is promoted by phosphorylation of FANCI. Ubiquitination is required for binding to chromatin, interaction with BRCA1, BRCA2 and MTMR15/FAN1, DNA repair, and normal cell cycle progression, but not for phosphorylation on Ser-222 or interaction with MEN1. In terms of processing, phosphorylated in response to various genotoxic stresses by ATM and/or ATR. Upon ionizing radiation, phosphorylated by ATM on Ser-222 and Ser-1404. Phosphorylation on Ser-222 is required for S-phase checkpoint activation, but not for ubiquitination, foci formation, or DNA repair. In contrast, phosphorylation by ATR on other sites may be required for ubiquitination and foci formation. Highly expressed in germinal center cells of the spleen, tonsil, and reactive lymph nodes, and in the proliferating basal layer of squamous epithelium of tonsil, esophagus, oropharynx, larynx and cervix. Expressed in cytotrophoblastic cells of the placenta and exocrine cells of the pancreas (at protein level). Highly expressed in testis, where expression is restricted to maturing spermatocytes.

Its subcellular location is the nucleus. Its function is as follows. Required for maintenance of chromosomal stability. Promotes accurate and efficient pairing of homologs during meiosis. Involved in the repair of DNA double-strand breaks, both by homologous recombination and single-strand annealing. The FANCI-FANCD2 complex binds and scans double-stranded DNA (dsDNA) for DNA damage; this complex stalls at DNA junctions between double-stranded DNA and single-stranded DNA. May participate in S phase and G2 phase checkpoint activation upon DNA damage. Plays a role in preventing breakage and loss of missegregating chromatin at the end of cell division, particularly after replication stress. Required for the targeting, or stabilization, of BLM to non-centromeric abnormal structures induced by replicative stress. Promotes BRCA2/FANCD1 loading onto damaged chromatin. May also be involved in B-cell immunoglobulin isotype switching. This is Fanconi anemia group D2 protein (FANCD2) from Homo sapiens (Human).